Here is a 372-residue protein sequence, read N- to C-terminus: Protein L-Myc-1a (372 aa).

Disordered regions lie at residues 172–226 and 243–306; these read KVAA…ADPF and NYAA…DDLR. Residues 187–197 are compositionally biased toward acidic residues; it reads SDDDEDDDEID. A compositionally biased stretch (low complexity) spans 269-284; the sequence is ESSSAPSSPLSSPATS. In terms of domain architecture, bHLH spans 289–341; it reads STEQRRNFLERKRRDDLRSRFQALREEIPGLSGSSKTSKVAILTQATDYLLQL. Residues 290 to 306 show a composition bias toward basic and acidic residues; it reads TEQRRNFLERKRRDDLR. The interval 341 to 369 is leucine-zipper; it reads LHSSQRRQAQEKRKLKAKQQQLLRRISAL.

As to quaternary structure, efficient DNA binding requires dimerization with another bHLH protein. Binds DNA as a heterodimer with max. Uterus.

The protein resides in the nucleus. The sequence is that of Protein L-Myc-1a from Danio rerio (Zebrafish).